The primary structure comprises 108 residues: Synaptic plasticity regulator PANTS (108 aa).

The tract at residues 58–108 is disordered; sequence KNHSTQAKDSLQESERKRLADQRKFTPVWELRQKPPSDWHLPLNQGEPQDP. Residues 67 to 81 show a composition bias toward basic and acidic residues; that stretch reads SLQESERKRLADQRK.

Belongs to the UPF0545 family. Rapidly degraded by proteolysis following neuronal stimulation, resulting in increased AMPA receptor clustering.

It localises to the synapse. The protein localises to the synaptic cleft. In terms of biological role, negatively regulates long-term potentiation and modulates adult synaptic plasticity. This is Synaptic plasticity regulator PANTS from Danio rerio (Zebrafish).